We begin with the raw amino-acid sequence, 557 residues long: MRDYDEVTAFLGEWGPFQRLIFFLLSASIIPNGFTGLSSVFLIATPEHRCRVPDAANLSSAWRNHTVPLRLRDGREVPHSCRRYRLATIANFSALGLEPGRDVDLGQLEQESCLDGWEFSQDVYLSTIVTEWNLVCEDDWKAPLTISLFFVGVLLGSFISGQLSDRFGRKNVLFVTMGMQTGFSFLQIFSKNFEMFVVLFVLVGMGQISNYVAAFVLGTEILGKSVRIIFSTLGVCIFYAFGYMVLPLFAYFIRDWRMLLVALTMPGVLCVALWWFIPESPRWLISQGRFEEAEVIIRKAAKANGIVVPSTIFDPSELQDLSSKKQQSHNILDLLRTWNIRMVTIMSIMLWMTISVGYFGLSLDTPNLHGDIFVNCFLSAMVEVPAYVLAWLLLQYLPRRYSMATALFLGGSVLLFMQLVPPDLYYLATVLVMVGKFGVTAAFSMVYVYTAELYPTVVRNMGVGVSSTASRLGSILSPYFVYLGAYDRFLPYILMGSLTILTAILTLFLPESFGTPLPDTIDQMLRVKGMKHRKTPSHTRMLKDGQERPTILKSTAF.

Residues 1 to 20 (MRDYDEVTAFLGEWGPFQRL) lie on the Cytoplasmic side of the membrane. The helical transmembrane segment at 21-41 (IFFLLSASIIPNGFTGLSSVF) threads the bilayer. The Extracellular portion of the chain corresponds to 42-142 (LIATPEHRCR…NLVCEDDWKA (101 aa)). 3 N-linked (GlcNAc...) asparagine glycosylation sites follow: Asn57, Asn64, and Asn91. The chain crosses the membrane as a helical span at residues 143 to 163 (PLTISLFFVGVLLGSFISGQL). Residues 164–172 (SDRFGRKNV) are Cytoplasmic-facing. The helical transmembrane segment at 173-193 (LFVTMGMQTGFSFLQIFSKNF) threads the bilayer. Over 194–197 (EMFV) the chain is Extracellular. A helical membrane pass occupies residues 198–218 (VLFVLVGMGQISNYVAAFVLG). 218-225 (GTEILGKS) contacts ATP. The Cytoplasmic portion of the chain corresponds to 219-232 (TEILGKSVRIIFST). The chain crosses the membrane as a helical span at residues 233-253 (LGVCIFYAFGYMVLPLFAYFI). Over 254–257 (RDWR) the chain is Extracellular. Residues 258 to 278 (MLLVALTMPGVLCVALWWFIP) form a helical membrane-spanning segment. At 279–341 (ESPRWLISQG…LDLLRTWNIR (63 aa)) the chain is on the cytoplasmic side. Residues 342–362 (MVTIMSIMLWMTISVGYFGLS) traverse the membrane as a helical segment. The Extracellular portion of the chain corresponds to 363-373 (LDTPNLHGDIF). Residues 374-394 (VNCFLSAMVEVPAYVLAWLLL) form a helical membrane-spanning segment. Residues 395–406 (QYLPRRYSMATA) are Cytoplasmic-facing. The helical transmembrane segment at 407–427 (LFLGGSVLLFMQLVPPDLYYL) threads the bilayer. At 428–430 (ATV) the chain is on the extracellular side. The helical transmembrane segment at 431 to 451 (LVMVGKFGVTAAFSMVYVYTA) threads the bilayer. Over 452-462 (ELYPTVVRNMG) the chain is Cytoplasmic. Residues 463–483 (VGVSSTASRLGSILSPYFVYL) traverse the membrane as a helical segment. Residues 484-488 (GAYDR) lie on the Extracellular side of the membrane. Tyr486 carries the phosphotyrosine modification. The helical transmembrane segment at 489–509 (FLPYILMGSLTILTAILTLFL) threads the bilayer. The segment at 535 to 557 (TPSHTRMLKDGQERPTILKSTAF) is disordered. Thr550 carries the post-translational modification Phosphothreonine.

The protein belongs to the major facilitator (TC 2.A.1) superfamily. Organic cation transporter (TC 2.A.1.19) family. Interacts with PDZK1. Post-translationally, glycosylated. Glycosylation affects the expression levels. In terms of processing, not glycosylated. In terms of tissue distribution, strongly expressed in kidney, skeletal muscle, heart and placenta. Primarily expressed by surface epithelial cells of the colon (at protein level). Expressed in CD68 macrophage and CD43 T-cells but not in CD20 B-cells. In testis, localized to Sertoli cell basal membranes, peritubular myoid cells and Leydig cells.

Its subcellular location is the cell membrane. The protein localises to the apical cell membrane. The protein resides in the basal cell membrane. It is found in the endoplasmic reticulum. It carries out the reaction (R)-carnitine(out) + Na(+)(out) = (R)-carnitine(in) + Na(+)(in). The enzyme catalyses glycine betaine(out) + Na(+)(out) = glycine betaine(in) + Na(+)(in). The catalysed reaction is glycine betaine(out) + (R)-carnitine(in) = glycine betaine(in) + (R)-carnitine(out). It catalyses the reaction O-butanoyl-(R)-carnitine(out) + Na(+)(out) = O-butanoyl-(R)-carnitine(in) + Na(+)(in). It carries out the reaction O-acetyl-(R)-carnitine(out) + Na(+)(out) = O-acetyl-(R)-carnitine(in) + Na(+)(in). The enzyme catalyses O-propanoyl-(R)-carnitine(out) + Na(+)(out) = O-propanoyl-(R)-carnitine(in) + Na(+)(in). The catalysed reaction is (S)-carnitine(out) + Na(+)(out) = (S)-carnitine(in) + Na(+)(in). It catalyses the reaction an O-acyl-(R)-carnitine(out) + Na(+)(out) = an O-acyl-(R)-carnitine(in) + Na(+)(in). It carries out the reaction L-glutamyl-L-arginyl-glycyl-L-methionyl-L-threonine(out) + Na(+)(out) = L-glutamyl-L-arginyl-glycyl-L-methionyl-L-threonine(in) + Na(+)(in). The enzyme catalyses N,N-dimethylglycine(out) + Na(+)(out) = N,N-dimethylglycine(in) + Na(+)(in). Its activity is regulated as follows. Inhibited by emetine, quinidine and verapamil. The IC(50) of emetine is 4.2 uM. Not inhibited by valproic acid. Transport of (R)-carnitine is stimulated by cholesterol in the plasma membrane. Sodium-ion dependent, high affinity carnitine transporter. Involved in the active cellular uptake of carnitine. Transports one sodium ion with one molecule of carnitine. Also transports organic cations such as tetraethylammonium (TEA) without the involvement of sodium. Relative uptake activity ratio of carnitine to TEA is 11.3. In intestinal epithelia, transports the quorum-sensing pentapeptide CSF (competence and sporulation factor) from B.subtilis which induces cytoprotective heat shock proteins contributing to intestinal homeostasis. May also contribute to regulate the transport of organic compounds in testis across the blood-testis-barrier. Functionally, retained in the ER, unable to perform carnitine uptake. This is Organic cation/carnitine transporter 2 from Homo sapiens (Human).